A 312-amino-acid polypeptide reads, in one-letter code: Olfactory receptor-like protein COR4 (312 aa).

Residues 1–26 lie on the Extracellular side of the membrane; that stretch reads MASGNCTTPTTFILSGLTDNPGLQMP. A glycan (N-linked (GlcNAc...) asparagine) is linked at asparagine 5. A helical transmembrane segment spans residues 27–49; it reads LFMVFLAIYTITLLTNLGLIALI. Topologically, residues 50–57 are cytoplasmic; it reads SVDLHLQT. The chain crosses the membrane as a helical span at residues 58 to 79; sequence PMYIFLQNLSFTDAAYSTVITP. At 80–100 the chain is on the extracellular side; the sequence is KMLATFLEERKTISYIGCILQ. The cysteines at positions 97 and 179 are disulfide-linked. The helical transmembrane segment at 101–120 threads the bilayer; it reads YFSFVLLTVTESLLLAVMAY. At 121–139 the chain is on the cytoplasmic side; sequence DRYVAICKPLLYPSIMTKA. The chain crosses the membrane as a helical span at residues 140–164; it reads VCWRLVKGLYSLAFLNSLVHTSGLL. At 165–205 the chain is on the extracellular side; it reads KLSFCSSNVVNHFFCDNSPLFQISSSSTTLNELLVFIFGSL. Residues 206–226 traverse the membrane as a helical segment; sequence FAMSSIITILISYVFIILTVV. The Cytoplasmic portion of the chain corresponds to 227–239; it reads RIRSKDGKYKAFS. The chain crosses the membrane as a helical span at residues 240–260; the sequence is TCTSHLMAVSLFHGTVIFMYL. Topologically, residues 261 to 271 are extracellular; it reads RPVKLFSLDTD. The helical transmembrane segment at 272–292 threads the bilayer; the sequence is KIASLFYTVVIPMLNPLIYSW. The Cytoplasmic segment spans residues 293–312; that stretch reads RNKEVKDALRRVIATNVWIH.

This sequence belongs to the G-protein coupled receptor 1 family.

It is found in the cell membrane. Odorant receptor. This Gallus gallus (Chicken) protein is Olfactory receptor-like protein COR4 (COR4).